Reading from the N-terminus, the 576-residue chain is Arginine--tRNA ligase (576 aa).

The short motif at 122–132 (PNVAKEMHVGH) is the 'HIGH' region element.

This sequence belongs to the class-I aminoacyl-tRNA synthetase family. Monomer.

The protein localises to the cytoplasm. The enzyme catalyses tRNA(Arg) + L-arginine + ATP = L-arginyl-tRNA(Arg) + AMP + diphosphate. This Pectobacterium carotovorum subsp. carotovorum (strain PC1) protein is Arginine--tRNA ligase.